Consider the following 481-residue polypeptide: Glutamyl-tRNA(Gln) amidotransferase subunit A (481 aa).

Catalysis depends on charge relay system residues K74 and S149. Residue S173 is the Acyl-ester intermediate of the active site.

The protein belongs to the amidase family. GatA subfamily. As to quaternary structure, heterotrimer of A, B and C subunits.

It carries out the reaction L-glutamyl-tRNA(Gln) + L-glutamine + ATP + H2O = L-glutaminyl-tRNA(Gln) + L-glutamate + ADP + phosphate + H(+). Allows the formation of correctly charged Gln-tRNA(Gln) through the transamidation of misacylated Glu-tRNA(Gln) in organisms which lack glutaminyl-tRNA synthetase. The reaction takes place in the presence of glutamine and ATP through an activated gamma-phospho-Glu-tRNA(Gln). This is Glutamyl-tRNA(Gln) amidotransferase subunit A from Francisella tularensis subsp. tularensis (strain WY96-3418).